The following is a 174-amino-acid chain: Small ribosomal subunit protein uS5c (174 aa).

In terms of domain architecture, S5 DRBM spans 17–80 (WEERVVQVKR…TDAKKHLVTV (64 aa)).

This sequence belongs to the universal ribosomal protein uS5 family. As to quaternary structure, part of the 30S ribosomal subunit. Contacts protein S4.

It is found in the plastid. The protein resides in the chloroplast. In terms of biological role, with S4 and S12 plays an important role in translational accuracy. The chain is Small ribosomal subunit protein uS5c (rps5) from Pyropia yezoensis (Susabi-nori).